A 292-amino-acid polypeptide reads, in one-letter code: UDP-3-O-acyl-N-acetylglucosamine deacetylase (292 aa).

Zn(2+) is bound by residues histidine 76, histidine 232, and aspartate 236. Residue histidine 259 is the Proton donor of the active site.

The protein belongs to the LpxC family. The cofactor is Zn(2+).

The enzyme catalyses a UDP-3-O-[(3R)-3-hydroxyacyl]-N-acetyl-alpha-D-glucosamine + H2O = a UDP-3-O-[(3R)-3-hydroxyacyl]-alpha-D-glucosamine + acetate. Its pathway is glycolipid biosynthesis; lipid IV(A) biosynthesis; lipid IV(A) from (3R)-3-hydroxytetradecanoyl-[acyl-carrier-protein] and UDP-N-acetyl-alpha-D-glucosamine: step 2/6. Catalyzes the hydrolysis of UDP-3-O-myristoyl-N-acetylglucosamine to form UDP-3-O-myristoylglucosamine and acetate, the committed step in lipid A biosynthesis. The protein is UDP-3-O-acyl-N-acetylglucosamine deacetylase of Thermodesulfovibrio yellowstonii (strain ATCC 51303 / DSM 11347 / YP87).